The sequence spans 341 residues: MATIKDVAKHAGVSTTTVSHVINKTRFVAENTKAAVWAAIKELHYSPSAVARSLKVNHTKSIGLLATSSEAPYFAEVIEAVENSCYSKGYTLILCNSHNNLDKQKAYLAMLAQKRVDGLLVMCSEYPEQLLGMLEDYRNIPMVVMDWGTARGDFTDSIIDNAFEGGYLAGRYLIERGHRDIGAIPGQLSRNTGGGRHQGFLKALEEANITLREEWVVQGDFEPESGYKAMHQILTQKHRPTAVFCGGDIMAMGAICAADELGLRVPQDISVIGYDNVRNARYFSPALTTIHQPKERLGETAFAMLLDRIVSKREDPQTIEVHPKLVERRSVADGPFRDYRR.

The region spanning 2-56 (ATIKDVAKHAGVSTTTVSHVINKTRFVAENTKAAVWAAIKELHYSPSAVARSLKV) is the HTH lacI-type domain. Positions 4–23 (IKDVAKHAGVSTTTVSHVIN) form a DNA-binding region, H-T-H motif. Residues 48–56 (SAVARSLKV) mediate DNA binding. Hypoxanthine-binding residues include Tyr73, Arg190, Thr192, Phe221, and Asp275.

Homodimer.

Its pathway is purine metabolism; purine nucleotide biosynthesis [regulation]. Functionally, is the main repressor of the genes involved in the de novo synthesis of purine nucleotides, regulating purB, purC, purEK, purF, purHD, purL, purMN and guaBA expression. PurR is allosterically activated to bind its cognate DNA by binding the purine corepressors, hypoxanthine or guanine, thereby effecting transcription repression. The sequence is that of HTH-type transcriptional repressor PurR from Yersinia enterocolitica serotype O:8 / biotype 1B (strain NCTC 13174 / 8081).